The chain runs to 422 residues: 3-carboxy-cis,cis-muconate cycloisomerase (422 aa).

It belongs to the class-II fumarase/aspartase family. As to quaternary structure, homotetramer.

It localises to the cytoplasm. The enzyme catalyses 2-(carboxymethyl)-5-oxo-2,5-dihydro-2-furoate = 3-carboxy-cis,cis-muconate + H(+). It functions in the pathway aromatic compound metabolism; beta-ketoadipate pathway; 5-oxo-4,5-dihydro-2-furylacetate from 3-carboxy-cis,cis-muconate: step 1/2. Catalyzes an anti cycloisomerization. This Pseudomonas putida (Arthrobacter siderocapsulatus) protein is 3-carboxy-cis,cis-muconate cycloisomerase (pcaB).